The primary structure comprises 331 residues: Meiotic recombination protein W68 (331 aa).

Residues 1-120 (MDEFSENIER…LGILAASKGL (120 aa)) form the Topo IIA-type catalytic domain. Residue Tyr81 is the O-(5'-phospho-DNA)-tyrosine intermediate of the active site. Residues Glu167 and Asp221 each coordinate Mg(2+).

Belongs to the TOP6A family. The cofactor is Mg(2+).

The protein resides in the nucleus. The enzyme catalyses ATP-dependent breakage, passage and rejoining of double-stranded DNA.. Its function is as follows. Required for meiotic recombination. Together with mei-P22, mediates DNA cleavage that forms the double-strand breaks (DSB) that initiate meiotic recombination. The protein is Meiotic recombination protein W68 of Drosophila melanogaster (Fruit fly).